Reading from the N-terminus, the 892-residue chain is Alanine--tRNA ligase (892 aa).

The Zn(2+) site is built by His-574, His-578, Cys-676, and His-680.

Belongs to the class-II aminoacyl-tRNA synthetase family. The cofactor is Zn(2+).

It is found in the cytoplasm. It carries out the reaction tRNA(Ala) + L-alanine + ATP = L-alanyl-tRNA(Ala) + AMP + diphosphate. Its function is as follows. Catalyzes the attachment of alanine to tRNA(Ala) in a two-step reaction: alanine is first activated by ATP to form Ala-AMP and then transferred to the acceptor end of tRNA(Ala). Also edits incorrectly charged Ser-tRNA(Ala) and Gly-tRNA(Ala) via its editing domain. This is Alanine--tRNA ligase from Prochlorococcus marinus (strain SARG / CCMP1375 / SS120).